Here is an 85-residue protein sequence, read N- to C-terminus: Large ribosomal subunit protein bL27 (85 aa).

Residues 1 to 21 form a disordered region; the sequence is MAHKKGQGSTQNNRDSAGRRL.

It belongs to the bacterial ribosomal protein bL27 family.

This Wolinella succinogenes (strain ATCC 29543 / DSM 1740 / CCUG 13145 / JCM 31913 / LMG 7466 / NCTC 11488 / FDC 602W) (Vibrio succinogenes) protein is Large ribosomal subunit protein bL27.